Here is a 416-residue protein sequence, read N- to C-terminus: UDP-N-acetylglucosamine 1-carboxyvinyltransferase (416 aa).

Residue 22-23 (KN) coordinates phosphoenolpyruvate. Arg91 contacts UDP-N-acetyl-alpha-D-glucosamine. Cys115 acts as the Proton donor in catalysis. Cys115 bears the 2-(S-cysteinyl)pyruvic acid O-phosphothioketal mark. UDP-N-acetyl-alpha-D-glucosamine-binding positions include 120-124 (RPIDL), Asp303, and Ile325.

Belongs to the EPSP synthase family. MurA subfamily.

Its subcellular location is the cytoplasm. It carries out the reaction phosphoenolpyruvate + UDP-N-acetyl-alpha-D-glucosamine = UDP-N-acetyl-3-O-(1-carboxyvinyl)-alpha-D-glucosamine + phosphate. The protein operates within cell wall biogenesis; peptidoglycan biosynthesis. Functionally, cell wall formation. Adds enolpyruvyl to UDP-N-acetylglucosamine. The sequence is that of UDP-N-acetylglucosamine 1-carboxyvinyltransferase from Lawsonia intracellularis (strain PHE/MN1-00).